We begin with the raw amino-acid sequence, 396 residues long: Elongation factor Tu (396 aa).

In terms of domain architecture, tr-type G spans K11–K205. Residues G20–T27 form a G1 region. Residue G20–T27 coordinates GTP. T27 contacts Mg(2+). The segment at G61–N65 is G2. The G3 stretch occupies residues D82 to G85. GTP contacts are provided by residues D82–H86 and N137–D140. The segment at N137–D140 is G4. Positions S175–L177 are G5.

This sequence belongs to the TRAFAC class translation factor GTPase superfamily. Classic translation factor GTPase family. EF-Tu/EF-1A subfamily. In terms of assembly, monomer.

Its subcellular location is the cytoplasm. It catalyses the reaction GTP + H2O = GDP + phosphate + H(+). GTP hydrolase that promotes the GTP-dependent binding of aminoacyl-tRNA to the A-site of ribosomes during protein biosynthesis. The chain is Elongation factor Tu from Limosilactobacillus fermentum (strain NBRC 3956 / LMG 18251) (Lactobacillus fermentum).